A 914-amino-acid polypeptide reads, in one-letter code: UPF0182 protein Syncc9605_1323 (914 aa).

A run of 9 helical transmembrane segments spans residues 4 to 24 (LLLL…WLWF), 37 to 57 (WLLQ…ARAW), 81 to 101 (IALL…LDLL), 123 to 143 (RIGS…MTWL), 152 to 172 (IVAA…SLAL), 195 to 215 (FAGL…TLVF), 240 to 260 (MRLI…LVWL), 285 to 305 (LPLR…LLLP), and 312 to 332 (QFLA…TPLT).

Belongs to the UPF0182 family.

Its subcellular location is the cell membrane. In Synechococcus sp. (strain CC9605), this protein is UPF0182 protein Syncc9605_1323.